The sequence spans 479 residues: ATP synthase subunit beta (479 aa).

ATP is bound at residue 153–160 (GGAGVGKT).

This sequence belongs to the ATPase alpha/beta chains family. In terms of assembly, F-type ATPases have 2 components, CF(1) - the catalytic core - and CF(0) - the membrane proton channel. CF(1) has five subunits: alpha(3), beta(3), gamma(1), delta(1), epsilon(1). CF(0) has three main subunits: a(1), b(2) and c(9-12). The alpha and beta chains form an alternating ring which encloses part of the gamma chain. CF(1) is attached to CF(0) by a central stalk formed by the gamma and epsilon chains, while a peripheral stalk is formed by the delta and b chains.

The protein resides in the cell membrane. It catalyses the reaction ATP + H2O + 4 H(+)(in) = ADP + phosphate + 5 H(+)(out). Produces ATP from ADP in the presence of a proton gradient across the membrane. The catalytic sites are hosted primarily by the beta subunits. This is ATP synthase subunit beta from Lactobacillus delbrueckii subsp. bulgaricus (strain ATCC BAA-365 / Lb-18).